The primary structure comprises 212 residues: Ribosomal RNA small subunit methyltransferase G (212 aa).

S-adenosyl-L-methionine is bound by residues Gly73, Phe78, 124-125 (IE), and Arg137.

It belongs to the methyltransferase superfamily. RNA methyltransferase RsmG family.

It localises to the cytoplasm. Specifically methylates the N7 position of a guanine in 16S rRNA. The sequence is that of Ribosomal RNA small subunit methyltransferase G from Karelsulcia muelleri (strain GWSS) (Sulcia muelleri).